We begin with the raw amino-acid sequence, 216 residues long: Inactive ribonuclease-like protein 10 (216 aa).

The signal sequence occupies residues 1 to 26 (MKLNLVQIFFMLLMLLLGLGMGLGLG). The segment at 43 to 65 (EFWSSDSQDKAEATEEGDGTQTT) is disordered.

It belongs to the pancreatic ribonuclease family. Post-translationally, the N-terminus is blocked. Glycosylated.

Its subcellular location is the secreted. Secreted proximal epididymal protein required for post-testicular sperm maturation and male fertility. May be involved in sperm adhesion to the egg zona pellucida. Does not have ribonuclease activity. The polypeptide is Inactive ribonuclease-like protein 10 (RNASE10) (Homo sapiens (Human)).